The primary structure comprises 142 residues: Large ribosomal subunit protein uL11 (142 aa).

The protein belongs to the universal ribosomal protein uL11 family. Part of the ribosomal stalk of the 50S ribosomal subunit. Interacts with L10 and the large rRNA to form the base of the stalk. L10 forms an elongated spine to which L12 dimers bind in a sequential fashion forming a multimeric L10(L12)X complex. Post-translationally, one or more lysine residues are methylated.

Forms part of the ribosomal stalk which helps the ribosome interact with GTP-bound translation factors. The chain is Large ribosomal subunit protein uL11 from Mycobacterium leprae (strain Br4923).